The following is a 260-amino-acid chain: Cell division protein DivIB (260 aa).

Over 1-25 (MGAQDQNGKNHGGLFRDFQNRNVKK) the chain is Cytoplasmic. A helical transmembrane segment spans residues 26-46 (MWPLVMPITIILLVMIFMISS). Residues 47–260 (YSRVKKVTVS…STKTTSVQGY (214 aa)) lie on the Extracellular side of the membrane. Positions 48-119 (SRVKKVTVSG…NQVKIKVEEY (72 aa)) constitute a POTRA domain.

This sequence belongs to the FtsQ/DivIB family. DivIB subfamily.

The protein resides in the cell membrane. Functionally, cell division protein that may be involved in stabilizing or promoting the assembly of the division complex. This Lentilactobacillus buchneri (strain NRRL B-30929) (Lactobacillus buchneri) protein is Cell division protein DivIB.